The sequence spans 504 residues: ATP synthase subunit alpha 2 (504 aa).

Residue 169-176 coordinates ATP; sequence GDRQTGKT.

Belongs to the ATPase alpha/beta chains family. As to quaternary structure, F-type ATPases have 2 components, CF(1) - the catalytic core - and CF(0) - the membrane proton channel. CF(1) has five subunits: alpha(3), beta(3), gamma(1), delta(1), epsilon(1). CF(0) has three main subunits: a(1), b(2) and c(9-12). The alpha and beta chains form an alternating ring which encloses part of the gamma chain. CF(1) is attached to CF(0) by a central stalk formed by the gamma and epsilon chains, while a peripheral stalk is formed by the delta and b chains.

It is found in the cell membrane. The enzyme catalyses ATP + H2O + 4 H(+)(in) = ADP + phosphate + 5 H(+)(out). In terms of biological role, produces ATP from ADP in the presence of a proton gradient across the membrane. The alpha chain is a regulatory subunit. The chain is ATP synthase subunit alpha 2 from Listeria innocua serovar 6a (strain ATCC BAA-680 / CLIP 11262).